The sequence spans 186 residues: UPF0397 protein LCABL_04350 (186 aa).

5 helical membrane passes run 12-32, 45-65, 77-97, 112-132, and 150-170; these read VVAI…AVIP, GFLG…IGFL, TPWW…GLFW, IVSF…LIAP, and GIVS…ILLV.

It belongs to the UPF0397 family.

Its subcellular location is the cell membrane. The polypeptide is UPF0397 protein LCABL_04350 (Lacticaseibacillus casei (strain BL23) (Lactobacillus casei)).